A 691-amino-acid chain; its full sequence is Guanylate cyclase soluble subunit alpha-1 (691 aa).

The tract at residues 26–65 (PREPLGEATGSGPASTPGQPGVCPGVPDKNPPGRLPRRKT) is disordered. In terms of domain architecture, Guanylate cyclase spans 482–609 (TMLFSDIVGF…NNVTLANKFE (128 aa)).

This sequence belongs to the adenylyl cyclase class-4/guanylyl cyclase family. Heterodimer of an alpha and a beta chain.

The protein localises to the cytoplasm. It catalyses the reaction GTP = 3',5'-cyclic GMP + diphosphate. Its activity is regulated as follows. Activated by nitric oxide in the presence of magnesium or manganese ions. In Bos taurus (Bovine), this protein is Guanylate cyclase soluble subunit alpha-1 (GUCY1A1).